The chain runs to 118 residues: V-type proton ATPase subunit G 1 (118 aa).

The residue at position 2 (alanine 2) is an N-acetylalanine. The tract at residues 55 to 90 is disordered; sequence FQSKQQAAMGSQGNLSAEVEQATRRQVQGMQSSQQR. Polar residues-rich tracts occupy residues 56–69 and 78–89; these read QSKQQAAMGSQGNL and RRQVQGMQSSQQ.

Belongs to the V-ATPase G subunit family. V-ATPase is a heteromultimeric enzyme made up of two complexes: the ATP-hydrolytic V1 complex and the proton translocation V0 complex. The V1 complex consists of three catalytic AB heterodimers that form a heterohexamer, three peripheral stalks each consisting of EG heterodimers, one central rotor including subunits D and F, and the regulatory subunits C and H. The proton translocation complex V0 consists of the proton transport subunit a, a ring of proteolipid subunits c9c'', rotary subunit d, subunits e and f, and the accessory subunits ATP6AP1/Ac45 and ATP6AP2/PRR.

The protein resides in the apical cell membrane. In terms of biological role, subunit of the V1 complex of vacuolar(H+)-ATPase (V-ATPase), a multisubunit enzyme composed of a peripheral complex (V1) that hydrolyzes ATP and a membrane integral complex (V0) that translocates protons. V-ATPase is responsible for acidifying and maintaining the pH of intracellular compartments and in some cell types, is targeted to the plasma membrane, where it is responsible for acidifying the extracellular environment. In aerobic conditions, involved in intracellular iron homeostasis, thus triggering the activity of Fe(2+) prolyl hydroxylase (PHD) enzymes, and leading to HIF1A hydroxylation and subsequent proteasomal degradation. The protein is V-type proton ATPase subunit G 1 (ATP6V1G1) of Canis lupus familiaris (Dog).